Consider the following 194-residue polypeptide: Isopentenyl-diphosphate Delta-isomerase (194 aa).

His27 and His34 together coordinate Mn(2+). Residues 32 to 166 (ALHLAFSCHV…PWAFSPWLTL (135 aa)) form the Nudix hydrolase domain. Cys69 is a catalytic residue. His71 contacts Mn(2+). A Mg(2+)-binding site is contributed by Glu89. Positions 116 and 118 each coordinate Mn(2+). Glu118 is a catalytic residue.

Belongs to the IPP isomerase type 1 family. Mg(2+) is required as a cofactor. Mn(2+) serves as cofactor.

It is found in the cytoplasm. The catalysed reaction is isopentenyl diphosphate = dimethylallyl diphosphate. It functions in the pathway isoprenoid biosynthesis; dimethylallyl diphosphate biosynthesis; dimethylallyl diphosphate from isopentenyl diphosphate: step 1/1. Functionally, catalyzes the 1,3-allylic rearrangement of the homoallylic substrate isopentenyl (IPP) to its highly electrophilic allylic isomer, dimethylallyl diphosphate (DMAPP). The protein is Isopentenyl-diphosphate Delta-isomerase of Clavibacter michiganensis subsp. michiganensis (strain NCPPB 382).